A 142-amino-acid chain; its full sequence is Large ribosomal subunit protein uL13 (142 aa).

It belongs to the universal ribosomal protein uL13 family. In terms of assembly, part of the 50S ribosomal subunit.

In terms of biological role, this protein is one of the early assembly proteins of the 50S ribosomal subunit, although it is not seen to bind rRNA by itself. It is important during the early stages of 50S assembly. This Aeromonas hydrophila subsp. hydrophila (strain ATCC 7966 / DSM 30187 / BCRC 13018 / CCUG 14551 / JCM 1027 / KCTC 2358 / NCIMB 9240 / NCTC 8049) protein is Large ribosomal subunit protein uL13.